A 125-amino-acid chain; its full sequence is N-alpha-acetyltransferase 38, NatC auxiliary subunit (125 aa).

The interval 1-42 (MAGAGPTMLLREENGCCSRRQSSSSAGDSDGEQEDSPATRAR) is disordered. N-acetylalanine is present on Ala-2. Residues 18–28 (SRRQSSSSAGD) show a composition bias toward low complexity. A phosphoserine mark is found at Ser-22, Ser-25, and Ser-29. Residues 40 to 118 (RARQQLEALL…IVSIEVQRES (79 aa)) enclose the Sm domain.

It belongs to the snRNP Sm proteins family. Component of the N-terminal acetyltransferase C (NatC) complex, which is composed of NAA35, NAA38 and NAA30.

Its subcellular location is the cytoplasm. The protein localises to the nucleus. Its function is as follows. Auxillary component of the N-terminal acetyltransferase C (NatC) complex which catalyzes acetylation of N-terminal methionine residues. N-terminal acetylation protects proteins from ubiquitination and degradation by the N-end rule pathway. This chain is N-alpha-acetyltransferase 38, NatC auxiliary subunit (Naa38), found in Mus musculus (Mouse).